We begin with the raw amino-acid sequence, 577 residues long: 5'-AMP-activated protein kinase subunit gamma (577 aa).

A disordered region spans residues 45 to 226 (QSEGVGGGEL…NNNNSNSNNN (182 aa)). The segment covering 58-88 (NNNTTNNNTPTNTTTTTNTNTTTMNNSNNNN) has biased composition (low complexity). Polar residues-rich tracts occupy residues 106–121 (SIEQ…SQDG) and 138–155 (ESQS…NNNM). Over residues 165 to 226 (STDNKSSTNT…NNNNSNSNNN (62 aa)) the composition is skewed to low complexity. 4 consecutive CBS domains span residues 279–341 (VIPI…KKPK), 364–426 (ERPS…QLPE), 438–499 (IGTF…LSPS), and 517–574 (QRPE…DVKS).

This sequence belongs to the 5'-AMP-activated protein kinase gamma subunit family.

AMPK may be responsible for the regulation of fatty acid synthesis by phosphorylation of acetyl-CoA carboxylase. This is 5'-AMP-activated protein kinase subunit gamma (prkag) from Dictyostelium discoideum (Social amoeba).